A 61-amino-acid chain; its full sequence is Ferredoxin (61 aa).

Residues 2 to 28 form the 4Fe-4S ferredoxin-type domain; the sequence is LYITEECTYCGACEPECPTNAISAGSE. 8 residues coordinate [4Fe-4S] cluster: Cys8, Cys11, Cys14, Cys18, Cys37, Cys40, Cys49, and Cys53.

Requires [4Fe-4S] cluster as cofactor.

Its function is as follows. Ferredoxins are iron-sulfur proteins that transfer electrons in a wide variety of metabolic reactions. The polypeptide is Ferredoxin (Chlorobaculum thiosulfatiphilum (Chlorobium limicola f.sp. thiosulfatophilum)).